A 302-amino-acid polypeptide reads, in one-letter code: Urease accessory protein UreD 2 (302 aa).

It belongs to the UreD family. As to quaternary structure, ureD, UreF and UreG form a complex that acts as a GTP-hydrolysis-dependent molecular chaperone, activating the urease apoprotein by helping to assemble the nickel containing metallocenter of UreC. The UreE protein probably delivers the nickel.

It localises to the cytoplasm. Its function is as follows. Required for maturation of urease via the functional incorporation of the urease nickel metallocenter. In Brucella ovis (strain ATCC 25840 / 63/290 / NCTC 10512), this protein is Urease accessory protein UreD 2.